Consider the following 225-residue polypeptide: Ribosomal RNA small subunit methyltransferase G (225 aa).

Residues glycine 89, leucine 94, isoleucine 140 to glutamate 141, and arginine 157 contribute to the S-adenosyl-L-methionine site.

This sequence belongs to the methyltransferase superfamily. RNA methyltransferase RsmG family.

The protein localises to the cytoplasm. It catalyses the reaction guanosine(527) in 16S rRNA + S-adenosyl-L-methionine = N(7)-methylguanosine(527) in 16S rRNA + S-adenosyl-L-homocysteine. In terms of biological role, specifically methylates the N7 position of guanine in position 527 of 16S rRNA. This chain is Ribosomal RNA small subunit methyltransferase G, found in Psychrobacter sp. (strain PRwf-1).